The sequence spans 475 residues: Argininosuccinate lyase (475 aa).

It belongs to the lyase 1 family. Argininosuccinate lyase subfamily.

Its subcellular location is the cytoplasm. It carries out the reaction 2-(N(omega)-L-arginino)succinate = fumarate + L-arginine. The protein operates within amino-acid biosynthesis; L-arginine biosynthesis; L-arginine from L-ornithine and carbamoyl phosphate: step 3/3. This is Argininosuccinate lyase from Leifsonia xyli subsp. xyli (strain CTCB07).